We begin with the raw amino-acid sequence, 205 residues long: Phosphoribosyl-dephospho-CoA transferase (205 aa).

Residues Asp-134 and Asp-136 contribute to the active site.

The protein belongs to the MdcG family.

The enzyme catalyses apo-[malonate decarboxylase ACP] + 2'-(5''-triphospho-alpha-D-ribosyl)-3'-dephospho-CoA = holo-[malonate decarboxylase ACP] + diphosphate. Its function is as follows. Transfers 2'-(5-triphosphoribosyl)-3'-dephosphocoenzyme-A to the apo-[acyl-carrier-protein] of the malonate decarboxylase to yield holo-[acyl-carrier-protein]. The polypeptide is Phosphoribosyl-dephospho-CoA transferase (Klebsiella pneumoniae (strain 342)).